Here is a 174-residue protein sequence, read N- to C-terminus: Adenine phosphoribosyltransferase (174 aa).

This sequence belongs to the purine/pyrimidine phosphoribosyltransferase family. In terms of assembly, homodimer.

The protein localises to the cytoplasm. The catalysed reaction is AMP + diphosphate = 5-phospho-alpha-D-ribose 1-diphosphate + adenine. The protein operates within purine metabolism; AMP biosynthesis via salvage pathway; AMP from adenine: step 1/1. Functionally, catalyzes a salvage reaction resulting in the formation of AMP, that is energically less costly than de novo synthesis. The polypeptide is Adenine phosphoribosyltransferase (Photobacterium profundum (strain SS9)).